Consider the following 441-residue polypeptide: Nuclear distribution protein nudF (441 aa).

One can recognise a LisH domain in the interval Gln9–Val41. WD repeat units follow at residues Gly87–Lys128, His130–Arg170, Gly174–Thr221, Gly224–Thr263, Gly266–Leu326, Gly328–Arg367, Ala372–Pro402, and Ala403–Ala440. Residues Gly390–Pro415 are disordered. Positions Thr398 to Gly410 are enriched in low complexity.

The protein belongs to the WD repeat LIS1/nudF family. Self-associates. Interacts with nudE and dynein.

It is found in the cytoplasm. It localises to the cytoskeleton. Its subcellular location is the spindle pole. Functionally, positively regulates the activity of the minus-end directed microtubule motor protein dynein. May enhance dynein-mediated microtubule sliding by targeting dynein to the microtubule plus end. Required for nuclear migration during vegetative growth as well as development. Required for retrograde early endosome (EE) transport from the hyphal tip. Required for localization of dynein to the mitotic spindle poles. Recruits additional proteins to the dynein complex at SPBs. The chain is Nuclear distribution protein nudF from Neosartorya fischeri (strain ATCC 1020 / DSM 3700 / CBS 544.65 / FGSC A1164 / JCM 1740 / NRRL 181 / WB 181) (Aspergillus fischerianus).